Consider the following 221-residue polypeptide: Beta-phosphoglucomutase (221 aa).

Asp8 (nucleophile) is an active-site residue. Positions 8 and 10 each coordinate Mg(2+). 4-aspartylphosphate is present on Asp8. Asp10 (proton donor/acceptor) is an active-site residue. Beta-D-glucose 6-phosphate is bound by residues Asp10, Gly46, Val47, Arg49, Ser116, Lys117, and Asn118. Asp170 is a binding site for Mg(2+).

This sequence belongs to the HAD-like hydrolase superfamily. CbbY/CbbZ/Gph/YieH family. In terms of assembly, monomer. Mg(2+) is required as a cofactor. Post-translationally, autophosphorylated.

It is found in the cytoplasm. The enzyme catalyses beta-D-glucose 1-phosphate = beta-D-glucose 6-phosphate. Its activity is regulated as follows. Activated by phosphorylation. Competitively inhibited by alpha-D-galactose-1-phosphate. Catalyzes the interconversion of D-glucose 1-phosphate (G1P) and D-glucose 6-phosphate (G6P), forming beta-D-glucose 1,6-(bis)phosphate (beta-G16P) as an intermediate. The beta-phosphoglucomutase (Beta-PGM) acts on the beta-C(1) anomer of G1P. Glucose or lactose are used in preference to maltose, which is only utilized after glucose or lactose has been exhausted. It plays a key role in the regulation of the flow of carbohydrate intermediates in glycolysis and the formation of the sugar nucleotide UDP-glucose. The sequence is that of Beta-phosphoglucomutase from Lactococcus lactis subsp. lactis (strain IL1403) (Streptococcus lactis).